A 241-amino-acid chain; its full sequence is MSLTLLPAVDVADGQAVRLVQGAAGSETVYGDPFDAALAWQRDGAEWIHLVDLDAAFGRGSNAELLADVVRRLDVRVELSGGIRDDASLQAALATGAARVNIGTAALEDPQWCDRVCGEYGDRVAIGLDVRGQTLSARGWTRDGGDLWEVLARLDRAGASRYVVTDITKDGTMRGPNLGLLREVCARTNAPVIASGGISTLADLRALAALEPVGVEGVIAGKALYAGAFTVAEALRTLADA.

Asp-10 (proton acceptor) is an active-site residue. Residue Asp-129 is the Proton donor of the active site.

This sequence belongs to the HisA/HisF family.

The protein resides in the cytoplasm. The enzyme catalyses 1-(5-phospho-beta-D-ribosyl)-5-[(5-phospho-beta-D-ribosylamino)methylideneamino]imidazole-4-carboxamide = 5-[(5-phospho-1-deoxy-D-ribulos-1-ylimino)methylamino]-1-(5-phospho-beta-D-ribosyl)imidazole-4-carboxamide. It participates in amino-acid biosynthesis; L-histidine biosynthesis; L-histidine from 5-phospho-alpha-D-ribose 1-diphosphate: step 4/9. The chain is 1-(5-phosphoribosyl)-5-[(5-phosphoribosylamino)methylideneamino] imidazole-4-carboxamide isomerase from Salinispora tropica (strain ATCC BAA-916 / DSM 44818 / JCM 13857 / NBRC 105044 / CNB-440).